The sequence spans 473 residues: Fumarate hydratase class II (473 aa).

Substrate-binding positions include 104-106 (SGT), 128-131 (HPND), 138-140 (SSN), and Thr186. The active-site Proton donor/acceptor is the His187. Ser318 is a catalytic residue. Substrate contacts are provided by residues Ser319 and 324–326 (KVN).

The protein belongs to the class-II fumarase/aspartase family. Fumarase subfamily. Homotetramer.

Its subcellular location is the cytoplasm. The catalysed reaction is (S)-malate = fumarate + H2O. It participates in carbohydrate metabolism; tricarboxylic acid cycle; (S)-malate from fumarate: step 1/1. Its function is as follows. Involved in the TCA cycle. Catalyzes the stereospecific interconversion of fumarate to L-malate. In Corynebacterium glutamicum (strain ATCC 13032 / DSM 20300 / JCM 1318 / BCRC 11384 / CCUG 27702 / LMG 3730 / NBRC 12168 / NCIMB 10025 / NRRL B-2784 / 534), this protein is Fumarate hydratase class II.